A 1024-amino-acid polypeptide reads, in one-letter code: Beta-galactosidase (1024 aa).

Residues Asn-103 and Asp-202 each coordinate substrate. Asp-202 contacts Na(+). Glu-417, His-419, and Glu-462 together coordinate Mg(2+). Residues Glu-462 and 538 to 541 each bind substrate; that span reads EYAH. The Proton donor role is filled by Glu-462. Glu-538 (nucleophile) is an active-site residue. Asn-598 serves as a coordination point for Mg(2+). Residues Phe-602 and Asn-605 each coordinate Na(+). The substrate site is built by Asn-605 and Trp-1000.

It belongs to the glycosyl hydrolase 2 family. In terms of assembly, homotetramer. The cofactor is Mg(2+). It depends on Na(+) as a cofactor.

It carries out the reaction Hydrolysis of terminal non-reducing beta-D-galactose residues in beta-D-galactosides.. The sequence is that of Beta-galactosidase from Shigella sonnei (strain Ss046).